A 180-amino-acid polypeptide reads, in one-letter code: ATP synthase subunit delta (180 aa).

It belongs to the ATPase delta chain family. In terms of assembly, F-type ATPases have 2 components, F(1) - the catalytic core - and F(0) - the membrane proton channel. F(1) has five subunits: alpha(3), beta(3), gamma(1), delta(1), epsilon(1). CF(0) has four main subunits: a(1), b(1), b'(1) and c(10-14). The alpha and beta chains form an alternating ring which encloses part of the gamma chain. F(1) is attached to F(0) by a central stalk formed by the gamma and epsilon chains, while a peripheral stalk is formed by the delta, b and b' chains.

The protein resides in the cellular thylakoid membrane. Functionally, f(1)F(0) ATP synthase produces ATP from ADP in the presence of a proton or sodium gradient. F-type ATPases consist of two structural domains, F(1) containing the extramembraneous catalytic core and F(0) containing the membrane proton channel, linked together by a central stalk and a peripheral stalk. During catalysis, ATP synthesis in the catalytic domain of F(1) is coupled via a rotary mechanism of the central stalk subunits to proton translocation. Its function is as follows. This protein is part of the stalk that links CF(0) to CF(1). It either transmits conformational changes from CF(0) to CF(1) or is implicated in proton conduction. This chain is ATP synthase subunit delta, found in Prochlorococcus marinus (strain AS9601).